A 691-amino-acid polypeptide reads, in one-letter code: Germ cell nuclear acidic protein (691 aa).

An SUMO interaction motif 1 (SIM) motif is present at residues I22–V25. Positions V25–T488 are disordered. Low complexity predominate over residues S27 to S36. Residues C48 to S63 show a composition bias toward polar residues. 3 short sequence motifs (SUMO interaction motif 1 (SIM)) span residues V76 to I79, L97 to I100, and I121 to S124. A compositionally biased stretch (basic and acidic residues) spans E86–L97. Positions S124–E333 are enriched in acidic residues. A compositionally biased stretch (basic residues) spans G467 to T488. Residues V522 to V677 form the SprT-like domain.

Belongs to the serine-aspartate repeat-containing protein (SDr) family. Interacts (via SIM domains) with SUMO2; this interaction allows the GCNA recruitment to DPCs sites. Interacts with TOP2A; this interaction allows the resolution of topoisomerase II (TOP2A) DNA-protein cross-links. In terms of tissue distribution, expressed in germ cells of the testis (at protein level). Detected in skeletal muscle, liver, kidney, pancreas, heart, lung and brain. Expressed throughout spermatogenesis, from spermatogonia to elongated spermatids, in normal adult testis (at protein level).

It localises to the nucleus. The protein resides in the PML body. The protein localises to the chromosome. Its function is as follows. May play a role in DNA-protein cross-links (DPCs) clearance through a SUMO-dependent recruitment to sites of DPCs, ensuring the genomic stability by protecting germ cells and early embryos from various sources of damage. Can resolve the topoisomerase II (TOP2A) DPCs. This is Germ cell nuclear acidic protein from Homo sapiens (Human).